Reading from the N-terminus, the 782-residue chain is Cyclic nucleotide-gated channel beta-3 (782 aa).

Disordered stretches follow at residues 1–111 and 147–168; these read MFKS…PKSK and GDISSPEASPQTAKPTAVPSTQ. At 1 to 213 the chain is on the cytoplasmic side; the sequence is MFKSLTIKSN…SIDSYTDRLY (213 aa). 2 stretches are compositionally biased toward basic and acidic residues: residues 13 to 25 and 57 to 73; these read KPREENDENKQDP and EESHAKMQDKISEKNSL. Polar residues-rich tracts occupy residues 74–83 and 152–168; these read RDLTTNPNHQ and PEASPQTAKPTAVPSTQ. A helical membrane pass occupies residues 214–237; that stretch reads LLWLLLVTIAYNWNCWLIPLRLVF. Over 238 to 244 the chain is Extracellular; sequence PYQTPDN. Residues 245-265 form a helical membrane-spanning segment; sequence THYWFITDITCDIIYLCDMLL. The Cytoplasmic segment spans residues 266–294; that stretch reads IQPRLQFIKGGDIMVDSNELKRHYRSSTK. A helical membrane pass occupies residues 295 to 312; it reads FQLDVASVMPFDVFYLFF. Residues 313–315 are Extracellular-facing; it reads GFN. A helical transmembrane segment spans residues 316-330; it reads PVFRMNRILKYTSFF. The Cytoplasmic segment spans residues 331–343; sequence EFNHHLESIMDKA. Residues 343–442 are ion conduction pathway; sequence AYIYRVIRTT…IGQMQDVIGA (100 aa). Residues 344–366 traverse the membrane as a helical segment; sequence YIYRVIRTTGYLLYTLHINACIY. Topologically, residues 367–388 are extracellular; the sequence is YWASDYEGIGSTKWVYNGEGNK. The next 2 helical transmembrane spans lie at 389 to 415 and 416 to 440; these read YLRCYYWAVRTLITIGGLPEPQTSFEI and VFQLLNFFSGVFVFSSLIGQMQDVI. The tract at residues 402–405 is selectivity filter; that stretch reads TIGG. The Cytoplasmic portion of the chain corresponds to 441-782; it reads GAATANQNNF…TIEVKEKAKQ (342 aa). A C-linker region spans residues 445-521; that stretch reads ANQNNFRISM…SIISKVELFK (77 aa). Residues 525–641 are cyclic nucleotide-binding domain; that stretch reads TQMIYDMLLR…LLMKKASVLL (117 aa). 3',5'-cyclic GMP contacts are provided by G586, E587, R599, and T600. The disordered stretch occupies residues 692–724; that stretch reads EQTIQKTSENSEEGGGKRREYEDKEREPSEKIL. The segment covering 705 to 724 has biased composition (basic and acidic residues); sequence GGGKRREYEDKEREPSEKIL.

Belongs to the cyclic nucleotide-gated cation channel (TC 1.A.1.5) family. CNGB3 subfamily. In terms of assembly, forms heterotetrameric channels composed of CNGA3 and CNGB3 subunits with 3:1 stoichiometry.

The protein resides in the cell membrane. It carries out the reaction Ca(2+)(in) = Ca(2+)(out). The enzyme catalyses Na(+)(in) = Na(+)(out). The catalysed reaction is K(+)(in) = K(+)(out). It catalyses the reaction NH4(+)(in) = NH4(+)(out). It carries out the reaction Rb(+)(in) = Rb(+)(out). The enzyme catalyses Li(+)(in) = Li(+)(out). The catalysed reaction is Cs(+)(in) = Cs(+)(out). Pore-forming subunit of the cone cyclic nucleotide-gated channel. Mediates cone photoresponses at bright light converting transient changes in intracellular cGMP levels into electrical signals. In the dark, cGMP levels are high and keep the channel open enabling a steady inward current carried by Na(+) and Ca(2+) ions that leads to membrane depolarization and neurotransmitter release from synaptic terminals. Upon photon absorption cGMP levels decline leading to channel closure and membrane hyperpolarization that ultimately slows neurotransmitter release and signals the presence of light, the end point of the phototransduction cascade. Conducts cGMP- and cAMP-gated ion currents, with permeability for monovalent and divalent cations. This chain is Cyclic nucleotide-gated channel beta-3, found in Canis lupus familiaris (Dog).